The sequence spans 73 residues: Translation initiation factor IF-1 (73 aa).

One can recognise an S1-like domain in the interval 1-73 (MAKKDGVIEI…TRGRIVYRYK (73 aa)).

The protein belongs to the IF-1 family. As to quaternary structure, component of the 30S ribosomal translation pre-initiation complex which assembles on the 30S ribosome in the order IF-2 and IF-3, IF-1 and N-formylmethionyl-tRNA(fMet); mRNA recruitment can occur at any time during PIC assembly.

The protein localises to the cytoplasm. Its function is as follows. One of the essential components for the initiation of protein synthesis. Stabilizes the binding of IF-2 and IF-3 on the 30S subunit to which N-formylmethionyl-tRNA(fMet) subsequently binds. Helps modulate mRNA selection, yielding the 30S pre-initiation complex (PIC). Upon addition of the 50S ribosomal subunit IF-1, IF-2 and IF-3 are released leaving the mature 70S translation initiation complex. The sequence is that of Translation initiation factor IF-1 from Paenarthrobacter aurescens (strain TC1).